Here is a 546-residue protein sequence, read N- to C-terminus: Src substrate cortactin (546 aa).

The tract at residues 1–28 (MWKASAGHAVSITQDDGGADDWETDPDF) is disordered. Residues 17 to 28 (GGADDWETDPDF) are compositionally biased toward acidic residues. Cortactin repeat units follow at residues 80–116 (ASHG…SQVD), 117–153 (SVRG…SQKD), 154–190 (YSSG…SQKD), 191–227 (YSKG…SQKD), 228–264 (YVKG…SQKD), and 265–301 (YKTG…SQQD). Residues K87 and K107 each carry the N6-acetyllysine modification. S113 is modified (phosphoserine). An Omega-N-methylarginine modification is found at R119. K124 carries the post-translational modification N6-acetyllysine. An N6-acetyllysine; alternate modification is found at K144. Residue K144 forms a Glycyl lysine isopeptide (Lys-Gly) (interchain with G-Cter in SUMO1); alternate linkage. K144 is covalently cross-linked (Glycyl lysine isopeptide (Lys-Gly) (interchain with G-Cter in SUMO2); alternate). S150 is subject to Phosphoserine. 3 positions are modified to N6-acetyllysine: K152, K161, and K171. K181 is subject to N6-acetyllysine; alternate. K181 is covalently cross-linked (Glycyl lysine isopeptide (Lys-Gly) (interchain with G-Cter in SUMO1); alternate). A Glycyl lysine isopeptide (Lys-Gly) (interchain with G-Cter in SUMO2); alternate cross-link involves residue K181. N6-acetyllysine occurs at positions 193 and 198. Residue K218 forms a Glycyl lysine isopeptide (Lys-Gly) (interchain with G-Cter in SUMO1) linkage. K235 bears the N6-acetyllysine mark. Phosphoserine is present on S261. K272 is subject to N6-acetyllysine. K295 carries the N6-acetyllysine; alternate modification. A Glycyl lysine isopeptide (Lys-Gly) (interchain with G-Cter in SUMO2); alternate cross-link involves residue K295. A Cortactin 7; truncated repeat occupies 302–324 (YAKGFGGKYGVQKDRMDKNASTF). Residues K304, K309, K314, and K346 each carry the N6-acetyllysine modification. The stretch at 348–401 (SNIRANFENLAKEREQEDRRKAEAERAQRMAKERQEQEEARRKLEEQARAKKQT) forms a coiled coil. A disordered region spans residues 355 to 424 (ENLAKEREQE…PPSSPIYEDA (70 aa)). Residues 357-396 (LAKEREQEDRRKAEAERAQRMAKERQEQEEARRKLEEQAR) show a composition bias toward basic and acidic residues. Residue T401 is modified to Phosphothreonine. S405, S407, S417, and S418 each carry phosphoserine. Phosphotyrosine is present on residues Y421 and Y442. Residue S443 is modified to Phosphoserine. Phosphotyrosine; by FAK1 is present on Y466. Y482 and Y485 each carry phosphotyrosine; by SRC. The SH3 domain maps to 488–546 (DLGITAIALYDYQAAGDDEISFDPDDIITNIEMIDDGWWRGVCKGRYGLFPANYVELRQ).

Part of a complex composed of NEDD9, AURKA and CTTN; within the complex NEDD9 acts as a scaffold protein and is required for complex formation. Interacts (via N-terminus) with NEDD9. Identified in a complex containing FGFR4, NCAM1, CDH2, PLCG1, FRS2, SRC, SHC1, GAP43 and CTTN. Forms a complex with ABL1 and MYLK. Interacts with SHANK2 and SHANK3 (via its SH3 domain). Interacts with PLXDC2 and SRCIN1. Interacts with SAMSN1 (via SH3 domain). Interacts (via SH3 domain) with ASAP1 (via Pro-rich region). Interacts (via SH3 domain) with DNM2. Interacts with ACTN1. Interacts with FER. Interacts with KCNA2 (via non-phosphorylated C-terminus). Interacts with FGD1. Interacts with ABL2. Interacts with CTTNBP2NL; this interaction may target CTTN to stress fibers. Interacts with CTTNBP2; this interaction may target CTTN at the cell cortex or dendritic spines. Interacts with KCNH1. Interacts (via SH3 domain) with DIP2A (via N-terminus); the interaction enhances CTTN acetylation and is required for proper synaptic transmission. Interacts with XIRP1 (via N-terminus); the interaction promotes CTTN localization to intercalated disks in cardiomyocytes. Acetylated. In terms of processing, phosphorylated by FER. Phosphorylated in response to FGR activation. Phosphorylation by SRC promotes MYLK binding. Phosphorylated on tyrosine residues in response to CHRM1 activation. Phosphorylated by PTK2/FAK1 in response to cell adhesion. Tyrosine phosphorylation in transformed cells may contribute to cellular growth regulation and transformation. Phosphorylated by PKN2 at both serine and threonine residues in a GTP-bound Rac1-dependent manner in hyaluronan-induced astrocytes and hence down-regulated CTTN ability to associate with filamentous actin. As to expression, expressed at intercalated disks in the heart (at protein level). Expressed in most tissues, except in B-lymphocytes or plasma cells.

The protein resides in the cytoplasm. The protein localises to the cytoskeleton. It is found in the cell projection. It localises to the lamellipodium. Its subcellular location is the ruffle. The protein resides in the dendrite. The protein localises to the cell membrane. It is found in the podosome. It localises to the cell junction. Its subcellular location is the focal adhesion. The protein resides in the membrane. The protein localises to the clathrin-coated pit. It is found in the dendritic spine. It localises to the cell cortex. Its subcellular location is the endoplasmic reticulum. Contributes to the organization of the actin cytoskeleton and cell shape. Plays a role in the formation of lamellipodia and in cell migration. Plays a role in the regulation of neuron morphology, axon growth and formation of neuronal growth cones. Through its interaction with CTTNBP2, involved in the regulation of neuronal spine density. Plays a role in focal adhesion assembly and turnover. In complex with ABL1 and MYLK regulates cortical actin-based cytoskeletal rearrangement critical to sphingosine 1-phosphate (S1P)-mediated endothelial cell (EC) barrier enhancement. Plays a role in intracellular protein transport and endocytosis, and in modulating the levels of potassium channels present at the cell membrane. Plays a role in receptor-mediated endocytosis via clathrin-coated pits. Required for stabilization of KCNH1 channels at the cell membrane. The polypeptide is Src substrate cortactin (Cttn) (Mus musculus (Mouse)).